The chain runs to 120 residues: Large ribosomal subunit protein bL20 (120 aa).

It belongs to the bacterial ribosomal protein bL20 family.

Functionally, binds directly to 23S ribosomal RNA and is necessary for the in vitro assembly process of the 50S ribosomal subunit. It is not involved in the protein synthesizing functions of that subunit. The sequence is that of Large ribosomal subunit protein bL20 from Desulfitobacterium hafniense (strain DSM 10664 / DCB-2).